Here is a 418-residue protein sequence, read N- to C-terminus: RapA guanosine triphosphatase-activating protein B (418 aa).

Positions 142–407 (LVKVCEPEFN…EKASALINVI (266 aa)) constitute a Rap-GAP domain. Positions 304–339 (NRVVGEQPSPSLTTTTTTTTTTSPTINSNSPTPSNK) are disordered. Positions 311–338 (PSPSLTTTTTTTTTTSPTINSNSPTPSN) are enriched in low complexity.

Its function is as follows. Mediates the deactivation of rap1 during multicellular development and is required for normal morphogenesis. Also required for the correct patterning of specific subtypes of prestalk cells. This Dictyostelium discoideum (Social amoeba) protein is RapA guanosine triphosphatase-activating protein B (rapgapB).